Consider the following 371-residue polypeptide: Putative glutamate--cysteine ligase 2 (371 aa).

The protein belongs to the glutamate--cysteine ligase type 2 family. YbdK subfamily.

It catalyses the reaction L-cysteine + L-glutamate + ATP = gamma-L-glutamyl-L-cysteine + ADP + phosphate + H(+). ATP-dependent carboxylate-amine ligase which exhibits weak glutamate--cysteine ligase activity. This chain is Putative glutamate--cysteine ligase 2, found in Cupriavidus necator (strain ATCC 17699 / DSM 428 / KCTC 22496 / NCIMB 10442 / H16 / Stanier 337) (Ralstonia eutropha).